A 45-amino-acid polypeptide reads, in one-letter code: Photosystem II reaction center protein K (45 aa).

Positions 1-8 (MITAIIIA) are excised as a propeptide. A helical transmembrane segment spans residues 23-43 (ILPVIPIFFLLLAFVWQAAIG).

The protein belongs to the PsbK family. In terms of assembly, PSII is composed of 1 copy each of membrane proteins PsbA, PsbB, PsbC, PsbD, PsbE, PsbF, PsbH, PsbI, PsbJ, PsbK, PsbL, PsbM, PsbT, PsbX, PsbY, PsbZ, Psb30/Ycf12, at least 3 peripheral proteins of the oxygen-evolving complex and a large number of cofactors. It forms dimeric complexes.

It localises to the plastid. Its subcellular location is the chloroplast thylakoid membrane. Functionally, one of the components of the core complex of photosystem II (PSII). PSII is a light-driven water:plastoquinone oxidoreductase that uses light energy to abstract electrons from H(2)O, generating O(2) and a proton gradient subsequently used for ATP formation. It consists of a core antenna complex that captures photons, and an electron transfer chain that converts photonic excitation into a charge separation. This is Photosystem II reaction center protein K from Gracilaria tenuistipitata var. liui (Red alga).